The chain runs to 467 residues: UDP-N-acetylmuramate--L-alanine ligase (467 aa).

Gly-114–Thr-120 serves as a coordination point for ATP.

Belongs to the MurCDEF family.

It is found in the cytoplasm. It catalyses the reaction UDP-N-acetyl-alpha-D-muramate + L-alanine + ATP = UDP-N-acetyl-alpha-D-muramoyl-L-alanine + ADP + phosphate + H(+). Its pathway is cell wall biogenesis; peptidoglycan biosynthesis. Its function is as follows. Cell wall formation. The chain is UDP-N-acetylmuramate--L-alanine ligase from Azorhizobium caulinodans (strain ATCC 43989 / DSM 5975 / JCM 20966 / LMG 6465 / NBRC 14845 / NCIMB 13405 / ORS 571).